A 338-amino-acid polypeptide reads, in one-letter code: Beta-ketoacyl-[acyl-carrier-protein] synthase III (338 aa).

Catalysis depends on residues Cys-119 and His-261. The interval 262-266 is ACP-binding; the sequence is QANQR. Asn-291 is a catalytic residue.

This sequence belongs to the thiolase-like superfamily. FabH family. As to quaternary structure, homodimer.

Its subcellular location is the cytoplasm. It carries out the reaction malonyl-[ACP] + acetyl-CoA + H(+) = 3-oxobutanoyl-[ACP] + CO2 + CoA. It functions in the pathway lipid metabolism; fatty acid biosynthesis. In terms of biological role, catalyzes the condensation reaction of fatty acid synthesis by the addition to an acyl acceptor of two carbons from malonyl-ACP. Catalyzes the first condensation reaction which initiates fatty acid synthesis and may therefore play a role in governing the total rate of fatty acid production. Possesses both acetoacetyl-ACP synthase and acetyl transacylase activities. Its substrate specificity determines the biosynthesis of branched-chain and/or straight-chain of fatty acids. This Prochlorococcus marinus (strain NATL2A) protein is Beta-ketoacyl-[acyl-carrier-protein] synthase III.